Reading from the N-terminus, the 85-residue chain is Large ribosomal subunit protein bL31B (85 aa).

This sequence belongs to the bacterial ribosomal protein bL31 family. Type B subfamily. In terms of assembly, part of the 50S ribosomal subunit.

This chain is Large ribosomal subunit protein bL31B, found in Macrococcus caseolyticus (strain JCSC5402) (Macrococcoides caseolyticum).